The chain runs to 275 residues: Large ribosomal subunit protein uL2 (275 aa).

The tract at residues 225–275 is disordered; that stretch reads MNPIDHPHGGGEGRTSGGRHPVTPWGKPTKGKKTRSNKKTDRLIMRRRQTQ.

This sequence belongs to the universal ribosomal protein uL2 family. Part of the 50S ribosomal subunit. Forms a bridge to the 30S subunit in the 70S ribosome.

Its function is as follows. One of the primary rRNA binding proteins. Required for association of the 30S and 50S subunits to form the 70S ribosome, for tRNA binding and peptide bond formation. It has been suggested to have peptidyltransferase activity; this is somewhat controversial. Makes several contacts with the 16S rRNA in the 70S ribosome. The chain is Large ribosomal subunit protein uL2 from Paramagnetospirillum magneticum (strain ATCC 700264 / AMB-1) (Magnetospirillum magneticum).